The primary structure comprises 268 residues: Tetraspanin-5 (268 aa).

Over 1 to 17 the chain is Cytoplasmic; it reads MSGKHYKGPEVSCCIKY. The chain crosses the membrane as a helical span at residues 18–38; sequence FIFGFNVIFWFLGITFLGIGL. Residues 39–61 lie on the Extracellular side of the membrane; the sequence is WAWNEKGVLSNISSITDLGGFDP. N-linked (GlcNAc...) asparagine glycosylation occurs at Asn-49. Residues 62–82 form a helical membrane-spanning segment; the sequence is VWLFLVVGGVMFILGFAGCIG. Residues 83-92 are Cytoplasmic-facing; that stretch reads ALRENTFLLK. The helical transmembrane segment at 93 to 113 threads the bilayer; it reads FFSVFLGIIFFLELTAGVLAF. The Extracellular portion of the chain corresponds to 114–232; the sequence is VFKDWIKDQL…PQFEKWLQDN (119 aa). 4 cysteine pairs are disulfide-bonded: Cys-153–Cys-221, Cys-154–Cys-186, Cys-170–Cys-180, and Cys-187–Cys-200. N-linked (GlcNAc...) asparagine glycosylation is found at Asn-169 and Asn-174. N-linked (GlcNAc...) asparagine glycosylation occurs at Asn-232. Residues 233 to 253 form a helical membrane-spanning segment; it reads LTIVAGIFIGIALLQIFGICL. The Cytoplasmic segment spans residues 254–268; sequence AQNLVSDIEAVRASW.

The protein belongs to the tetraspanin (TM4SF) family. In terms of assembly, interacts with ADAM10; the interaction influences ADAM10 substrate specificity, endocytosis and turnover. In terms of processing, palmitoylated.

It localises to the cell membrane. Functionally, part of TspanC8 subgroup, composed of 6 members that interact with the transmembrane metalloprotease ADAM10. This interaction is required for ADAM10 exit from the endoplasmic reticulum and for enzymatic maturation and trafficking to the cell surface as well as substrate specificity. Different TspanC8/ADAM10 complexes have distinct substrates. Promotes ADAM10-mediated cleavage of CD44. Seems to regulate VE-cadherin expression in endothelial cells probably through interaction with ADAM10, promoting leukocyte transmigration. This Homo sapiens (Human) protein is Tetraspanin-5.